Consider the following 579-residue polypeptide: MNQRDTLWILTAVLNATNCSMQLEHSSSFILRPNNQVVVFPFIFRGCNIAVLPTAKHSDLRRNPKRMEDSEPLFCNISHIIWSFTIGGVAYKDDDRFKRLFSERMEGYLKDISSNTSKVYMKGNKTFSEFLEAVYKRIFQCDGKRGGHVMRYGEDVMKEIGGMMENAPPELSEEEKRQHQRLWGNIKKYTEYLYNIERLKHLIEVEKMVCDACKEICLGLREEELMGLLAEGRMRKSLKMKLGDEEAGKKGYLEYAIVNDEILLDAHREYGGEVTKELVMQMLLGKKGEEIDKRYINKVANMIKERQRRREREIEKRVKKLLRDEEKAKGRKDGKKKSVNVSEVKEEESETEEVEAGEEAEMPSMEIGGARRKTGKKSRGGRKRYKIHKRVSRWRKSPEKIKEEWDRESEERWRGRSLEEIKEQKVFHDIAGVLELLRSEDADKFFIDTGEYTKGGSSRGRLVAIGVLESGEKKMLGVVEVGTFKDSPSGCPVVYHLMFRVTGIEEIGSVMSPEFAEANDIEKIDEDKEYQDMGKFVYPKGTEYEIVRREQSFQIVWGNPFDTSEVLCRLTIQCRPCVI.

Disordered stretches follow at residues Glu325–Ala360 and Ala370–Lys389. Positions Lys329–Ser338 are enriched in basic residues. Positions Lys345–Ala360 are enriched in acidic residues.

Belongs to the UPF0329 family.

This Encephalitozoon cuniculi (strain GB-M1) (Microsporidian parasite) protein is UPF0329 protein ECU06_1620.